A 328-amino-acid polypeptide reads, in one-letter code: 2,4-dinitroanisole O-demethylase subunit alpha (328 aa).

A propeptide spanning residues 1 to 9 is cleaved from the precursor; that stretch reads MSVTSQTSS. Zn(2+) is bound by residues histidine 101, histidine 103, aspartate 105, histidine 168, histidine 225, and cysteine 247.

The protein belongs to the metallo-beta-lactamase superfamily. As to quaternary structure, part of the complex DnhAB composed of the 2,4-dinitroanisole O-demethylase alpha (DnhA) and beta (DnhB) subunits. Zn(2+) serves as cofactor.

It carries out the reaction 2,4-dinitroanisole + H2O = 2,4-dinitrophenol + methanol + H(+). Functionally, involved in the degradation of 2,4-dinitroanisole (DNAN), an insensitive munition ingredient used in explosive formulations as a replacement for 2,4,6-trinitrotoluene (TNT). Catalyzes the removal of the methyl group from 2,4-dinitroanisole (DNAN) to yield 2,4-dinitrophenol (2,4-DNP) and methanol. This Nocardioides sp. (strain JS1661) protein is 2,4-dinitroanisole O-demethylase subunit alpha.